Here is a 105-residue protein sequence, read N- to C-terminus: Small ribosomal subunit protein uS10 (105 aa).

This sequence belongs to the universal ribosomal protein uS10 family. As to quaternary structure, part of the 30S ribosomal subunit.

Its function is as follows. Involved in the binding of tRNA to the ribosomes. This Trichodesmium erythraeum (strain IMS101) protein is Small ribosomal subunit protein uS10.